Reading from the N-terminus, the 327-residue chain is Secondary metabolism regulator LAE1 (327 aa).

The protein belongs to the methyltransferase superfamily. LaeA methyltransferase family.

The protein localises to the nucleus. It carries out the reaction L-methionyl-[protein] + S-adenosyl-L-methionine = S-methyl-L-methionyl-[protein] + S-adenosyl-L-homocysteine. In terms of biological role, secondary metabolism regulator that controls the expression of the tenuazonic acid biosynthesis cluster. Methyltransferase that performs automethylation. No other methyl-accepting substrate has been identified yet. This is Secondary metabolism regulator LAE1 from Pyricularia oryzae (strain 70-15 / ATCC MYA-4617 / FGSC 8958) (Rice blast fungus).